Reading from the N-terminus, the 464-residue chain is Arylsulfatase (464 aa).

An N-terminal signal peptide occupies residues 1–20 (MNKKAMAAAVSMILAGGAHA). Ca(2+) contacts are provided by D34, D35, and S72. The active-site Nucleophile is S72. S72 bears the 3-oxoalanine (Ser) mark. H134 is a catalytic residue. Residues D329 and N330 each contribute to the Ca(2+) site.

Belongs to the sulfatase family. Ca(2+) is required as a cofactor. Post-translationally, the conversion to 3-oxoalanine (also known as C-formylglycine, FGly), of a serine or cysteine residue in prokaryotes and of a cysteine residue in eukaryotes, is critical for catalytic activity.

It localises to the periplasm. It catalyses the reaction an aryl sulfate + H2O = a phenol + sulfate + H(+). Functionally, plays an important role in the mineralization of sulfates. This is Arylsulfatase (atsA) from Klebsiella aerogenes (Enterobacter aerogenes).